We begin with the raw amino-acid sequence, 449 residues long: MAAVVKSVALAGRPTTPDRVHEVLGRSMLVDGLDIVLDLTRSGGSYLVDAITGRRYLDMFTFVASSALGMNPPALVDDREFHAELMQAALNKPSNSDVYSVAMARFVETFARVLGDPALPHLFFVEGGALAVENALKAAFDWKSRHNQAHGIDPALGTQVLHLRGAFHGRSGYTLSLTNTKPTITARFPKFDWPRIDAPYMRPGLDEPAMAALEAEALRQARAAFETRPHDIACFVAEPIQGEGGDRHFRPEFFAAMRELCDEFDALLIFDEVQTGCGLTGTAWAYQQLDVAPDIVAFGKKTQVCGVMAGRRVDEVADNVFAVPSRLNSTWGGNLTDMVRARRILEVIEAEGLFERAVQHGKYLRARLDELAADFPAVVLDPRGRGLMCAFSLPTTADRDELIRQLWQRAVIVLPAGADTVRFRPPLTVSTAEIDAAIAAVRSALPVVT.

The pyridoxal 5'-phosphate site is built by glycine 128 and alanine 129. Residues arginine 170 and glutamine 274 each coordinate 2-oxoglutarate. L-lysine is bound at residue arginine 170. Glutamine 274 contributes to the pyridoxal 5'-phosphate binding site. Lysine 300 is modified (N6-(pyridoxal phosphate)lysine). Arginine 422 serves as a coordination point for 2-oxoglutarate.

This sequence belongs to the class-III pyridoxal-phosphate-dependent aminotransferase family. It depends on pyridoxal 5'-phosphate as a cofactor.

The enzyme catalyses L-lysine + 2-oxoglutarate = (S)-2-amino-6-oxohexanoate + L-glutamate. Catalyzes the transfer of the terminal amino group of L-lysine to alpha-ketoglutarate to yield L-glutamate and 2-aminoadipate 6-semialdehyde ((S)-2-amino-6-oxohexanoate), which is spontaneously converted to the dehydrated form 1-piperideine 6-carboxylate. The chain is L-lysine-epsilon aminotransferase from Mycobacterium bovis (strain ATCC BAA-935 / AF2122/97).